Consider the following 100-residue polypeptide: Small ribosomal subunit protein uS14 (100 aa).

Belongs to the universal ribosomal protein uS14 family. Part of the 30S ribosomal subunit. Contacts proteins S3 and S10.

Binds 16S rRNA, required for the assembly of 30S particles and may also be responsible for determining the conformation of the 16S rRNA at the A site. This chain is Small ribosomal subunit protein uS14, found in Prochlorococcus marinus (strain MIT 9313).